We begin with the raw amino-acid sequence, 507 residues long: Cyclic GMP-AMP synthase (507 aa).

Residues 1 to 146 (MEDPRRRTTA…PRAPRGSRKE (146 aa)) form a DNA-binding region. Residues 1–151 (MEDPRRRTTA…GSRKEPDKLK (151 aa)) are disordered. Positions 7 to 18 (RTTAPRAKKPSA) are enriched in basic residues. Basic and acidic residues predominate over residues 44–57 (RRAERDGDTTEKPR). Residues 48–59 (RDGDTTEKPRAP) form a required for association with the cell membrane region. Threonine 52 is modified (phosphothreonine). Positions 119–132 (RKVVRGPSHRRGAR) are required for activation upon DNA viral infection. Over residues 121 to 131 (VVRGPSHRRGA) the composition is skewed to basic residues. A Nuclear export signal motif is present at residues 154–159 (LDKLRL). N6-lactoyllysine is present on lysine 156. Positions 158-201 (RLKRKDISEAAETVNKVVERLLRRMQKRESEFKGVEQLNTGSYY) are DNA-binding. PolyADP-ribosyl glutamic acid is present on glutamate 176. Threonine 197 is a binding site for GTP. Position 199 (serine 199) interacts with ATP. Serine 199 bears the Phosphoserine mark. At tyrosine 201 the chain carries Phosphotyrosine. The Mg(2+) site is built by glutamate 211 and aspartate 213. Residue aspartate 213 participates in 2',3'-cGAMP binding. Lysine 217 participates in a covalent cross-link: Glycyl lysine isopeptide (Lys-Gly) (interchain with G-Cter in SUMO). A Glycyl lysine isopeptide (Lys-Gly) (interchain with G-Cter in ubiquitin) cross-link involves residue lysine 271. Position 272 is a 5-glutamyl polyglutamate (glutamate 272). The short motif at 281-291 (DVSVEKEKPGS) is the Nuclear localization signal element. Glycine 290 serves as a coordination point for 2',3'-cGAMP. Serine 291 is subject to Phosphoserine; by CDK1 and PKB. Glutamate 302 carries the post-translational modification 5-glutamyl glutamate. Position 307 (aspartate 307) interacts with GTP. Aspartate 307 contributes to the Mg(2+) binding site. Aspartate 307 serves as a coordination point for 2',3'-cGAMP. An interaction with collided ribosomes region spans residues 329–370 (QGWLGTKVRTNLRREPFYLVPKNAKDGNSFQGETWRLSFSHT). Lysine 335 participates in a covalent cross-link: Glycyl lysine isopeptide (Lys-Gly) (interchain with G-Cter in SUMO); alternate. Lysine 335 is covalently cross-linked (Glycyl lysine isopeptide (Lys-Gly) (interchain with G-Cter in ubiquitin); alternate). Residues lysine 350 and 364–366 (RLS) each bind 2',3'-cGAMP. 364–371 (RLSFSHTE) is a GTP binding site. Glutamate 371 is a binding site for ATP. Residue lysine 372 forms a Glycyl lysine isopeptide (Lys-Gly) (interchain with G-Cter in SUMO); alternate linkage. A Glycyl lysine isopeptide (Lys-Gly) (interchain with G-Cter in ubiquitin); alternate cross-link involves residue lysine 372. Lysine 372 carries the N6-acetyllysine modification. The tract at residues 372 to 395 (KYILNNHGIEKTCCESSGAKCCRK) is DNA-binding. Position 378 (histidine 378) interacts with Zn(2+). Lysine 382 participates in a covalent cross-link: Glycyl lysine isopeptide (Lys-Gly) (interchain with G-Cter in SUMO). Lysine 382 carries the N6-acetyllysine modification. Zn(2+)-binding residues include cysteine 384, cysteine 385, and cysteine 392. 2 S-palmitoyl cysteine lipidation sites follow: cysteine 392 and cysteine 393. Glycyl lysine isopeptide (Lys-Gly) (interchain with G-Cter in ubiquitin) cross-links involve residues lysine 399, lysine 402, lysine 409, and lysine 410. Position 402 (lysine 402) interacts with ATP. The residue at position 402 (lysine 402) is an N6-acetyllysine. Serine 420 carries the phosphoserine modification. 420–424 (SYHVK) serves as a coordination point for ATP. The S-palmitoyl cysteine moiety is linked to residue cysteine 459. Lysine 464 participates in a covalent cross-link: Glycyl lysine isopeptide (Lys-Gly) (interchain with G-Cter in SUMO); alternate. Residue lysine 464 forms a Glycyl lysine isopeptide (Lys-Gly) (interchain with G-Cter in ubiquitin); alternate linkage. An N6-methyllysine modification is found at lysine 491.

This sequence belongs to the mab-21 family. As to quaternary structure, monomer in the absence of DNA. Homodimer in presence of dsDNA: forms a 2:2 dimer with two enzymes binding to two DNA molecules. Interacts with nucleosomes; interaction is mainly mediated via histones H2A and H2B and inactivates the nucleotidyltransferase activity by blocking DNA-binding and subsequent activation. Interacts with PQBP1 (via WW domain). Interacts with TRIM14; this interaction recruits USP14, leading to deubiquitinate and stabilize CGAS and promote type I interferon production. Interacts with ZCCHC3; promoting sensing of dsDNA by CGAS. Interacts (when not monomethylated) with (poly-ADP-ribosylated) PARP1; interaction takes place in the nucleus and prevents the formation of the PARP1-TIMELESS complex. Interacts (when monomethylated) with SGF29; interaction with SGF29 prevents interaction with PARP1. Interacts with PCBP2; preventing the formation of liquid-like droplets in which CGAS is activated. Interacts with Irgm1; promoting CGAS degradation. Interacts with DDX41. It depends on Mg(2+) as a cofactor. The cofactor is Mn(2+). Zn(2+) is required as a cofactor. The N-terminal disordered part (1-146) is phosphorylated by AURKB during the G2-M transition, blocking CGAS liquid phase separation and preventing activation. Phosphorylation at Tyr-201 by BLK promotes cytosolic retention. Localizes into the nucleus following dephosphorylation at Tyr-201. Phosphorylation at Ser-420 activates the nucleotidyltransferase activity. Dephosphorylation at Ser-420 by PPP6C impairs its ability to bind GTP, thereby inactivating it. Phosphorylation at Thr-52 and Ser-199 by PRKDC inhibits its cyclic GMP-AMP synthase activity by impairing homodimerization and activation. Phosphorylation at Ser-291 by AKT (AKT1, AKT2 or AKT3) suppresses the nucleotidyltransferase activity. Phosphorylation at Ser-291 by CDK1 during mitosis leads to its inhibition, thereby preventing CGAS activation by self-DNA during mitosis. Dephosphorylated at Ser-291 by protein phosphatase PP1 upon mitotic exit. In terms of processing, ubiquitinated at Lys-402 via 'Lys-48'-linked polyubiquitin chains, leading to its SQSTM1-mediated autophagic degradation. Interaction with TRIM14 promotes recruitment of USP14, leading to deubiquitinate Lys-402 and stabilize CGAS. Ubiquitinated at Lys-372 by RNF185 via 'Lys-27'-linked polyubiquitination, promoting CGAS cyclic GMP-AMP synthase activity. Monoubiquitination at Lys-335 by TRIM56 promotes oligomerization and subsequent activation. Monoubiquitination by TRIM41 promotes CGAS activation. Ubiquitination at Lys-271 and Lys-464 via 'Lys-48'-linked polyubiquitination promotes its degradation. Deubiquitination at Lys-271 by USP29 promotes its stabilization. Deubiquitinated by USP27X, promoting its stabilization. Ubiquitinated at Lys-399 via 'Lys-63'-linked polyubiquitin chains by MARCHF8, leading to the inhibition of its DNA binding ability. In cycling cells, nucleosome-bound CGAS is ubiquitinated at Lys-409 and Lys-410 via 'Lys-48'-linked polyubiquitin chains by the ECS(SPSB3) complex, leading to its degradation: ubiquitination and degradation of nuclear CGAS during G1 and G2 phases is required to promote low intranuclear CGAS abundance before the next mitotic cycle. Post-translationally, sumoylated at Lys-217 and Lys-464 by TRIM38 in uninfected cells and during the early phase of viral infection, promoting its stability by preventing ubiquitination at Lys-271 and Lys-464, and subsequent degradation. Desumoylated by SENP2 during the late phase of viral infection. Sumoylation at Lys-335, Lys-372 and Lys-382 prevents DNA-binding, oligomerization and nucleotidyltransferase activity. Desumoylation at Lys-335, Lys-372 and Lys-382 by SENP7 relieves inhibition and activates CGAS. Polyglutamylated by TTLL6 at Glu-272, leading to impair DNA-binding activity. Monoglutamylated at Glu-302 by TTLL4, leading to impair the nucleotidyltransferase activity. Deglutamylated by AGBL5/CCP5 and AGBL6/CCP6. In terms of processing, acetylation at Lys-372, Lys-382 and Lys-402 inhibits the cyclic GMP-AMP synthase activity. Deacetylated upon cytosolic DNA challenge such as viral infections. Acetylation by KAT5 increases the cyclic GMP-AMP synthase activity by promoting DNA-binding and subsequent activation. Post-translationally, proteolytically cleaved by apoptotic caspases during apoptosis, leading to its inactivation. The damage of the nucleus and the mitochondria during apoptosis leads to leakage of nuclear and mitochondrial DNA, which activate CGAS: cleavage and inactivation during apoptosis in required to prevent cytokine overproduction. Cleaved by CASP7 and CASP3 during virus-induced apoptosis, thereby inactivating it and preventing cytokine overproduction. Cleaved by CASP1 upon DNA virus infection; the cleavage impairs cGAMP production. Also cleaved by the pyroptotic CASP4 during non-canonical inflammasome activation; does not cut at the same sites than CASP1. Degraded via selective autophagy following interaction with Irgm1. Irgm1 promotes CGAS recruitment to autophagosome membranes, promoting its SQSTM1/p62-dependent autophagic degradation. In terms of processing, poly-ADP-ribosylation at Glu-176 by PARP1 impairs DNA-binding, thereby preventing the cyclic GMP-AMP synthase activity. Post-translationally, palmitoylation at Cys-459 by ZDHHC18 impairs DNA-binding, thereby preventing the cyclic GMP-AMP synthase activity. Palmitoylation at Cys-392 and Cys-393 by ZDHHC9 promotes homodimerization and cyclic GMP-AMP synthase activity. Depalmitoylation at Cys-392 and Cys-393 by LYPLAL1 impairs homodimerization and cyclic GMP-AMP synthase activity. Monomethylated at Lys-491 by SETD7. Monomethylation promotes interaction with SGF29, preventing interaction between PARP1 nad SGF29. Demethylation by RIOX1 promotes interaction with PARP1, followed by PARP1 inactivation. In terms of processing, lactylation by AARS2 prevents ability to undergo liquid-liquid phase separation (LLPS), thereby inhibiting CGAS activation.

The protein resides in the nucleus. Its subcellular location is the chromosome. It localises to the cell membrane. It is found in the cytoplasm. The protein localises to the cytosol. It catalyses the reaction GTP + ATP = 2',3'-cGAMP + 2 diphosphate. The enzyme catalyses GTP + ATP = pppGp(2'-5')A + diphosphate. It carries out the reaction pppGp(2'-5')A = 2',3'-cGAMP + diphosphate. With respect to regulation, the enzyme activity is strongly increased by double-stranded DNA (dsDNA), but not by single-stranded DNA or RNA. DNA-binding induces the formation of liquid-like droplets in which CGAS is activated. Liquid-like droplets also create a selective environment that restricts entry of negative regulators, such as TREX1 or BANF1/BAF, allowing sensing of DNA. A number of mechanisms exist to restrict its activity toward self-DNA. The nucleotidyltransferase activity is inhibited in the nucleus via its association with nucleosomes: interacts with the acidic patch of histones H2A and H2B, thereby blocking DNA-binding and subsequent activation. CGAS is also inactive when associated with mitotic chromatin. Chromatin-bound CGAS cannot be activated by exogenous DNA in mitotic cells: phosphorylation of the N-terminal disordered part by AURKB during the G2-M transition blocks CGAS liquid phase separation and activation. Activity toward self-DNA is inhibited by BANF1/BAF upon acute loss of nuclear membrane integrity: BANF1/BAF acts by outcompeting CGAS for DNA-binding, thereby preventing CGAS activation. DNA-induced activation at micronuclei is also limited by TREX1, which degrades micronuclear DNA upon nuclear envelope rupture, thereby preventing CGAS activation. CGAS can be released from nucleosomes and activated by MRE11 component of the MRN complex, which displaces CGAS from acidic-patch-mediated sequestration. Acetylation at Lys-372, Lys-382 and Lys-402 inhibits the cyclic GMP-AMP synthase activity. Acetylation by KAT5 increases the cyclic GMP-AMP synthase activity by promoting DNA-binding and subsequent activation. Phosphorylation at Ser-291 suppresses the nucleotidyltransferase activity. Phosphorylation at Ser-420 promotes the cyclic GMP-AMP synthase activity. Phosphorylation at Thr-52 and Ser-199 inhibits its cyclic GMP-AMP synthase activity. Ubiquitination at Lys-372 via 'Lys-27'-linked polyubiquitination enhances the cyclic GMP-AMP synthase activity. Monoubiquitination at Lys-335 promotes oligomerization and subsequent activation. Sumoylation at Lys-335, Lys-372 and Lys-382 prevents DNA-binding, oligomerization and nucleotidyltransferase activity. The enzyme activity is impaired by the cleavage by CASP1. In addition to DNA, also activated by collided ribosomes upon translation stress: specifically binds collided ribosomes, promoting its activation and triggering type-I interferon production. In hematopoietic stem cells, binding to circular RNA cia-cGAS inhibits the cyclic GMP-AMP synthase activity. Strongly inhibited by compound RU.521, which is specific for mouse protein. Nucleotidyltransferase that catalyzes the formation of cyclic GMP-AMP (2',3'-cGAMP) from ATP and GTP and plays a key role in innate immunity. Catalysis involves both the formation of a 2',5' phosphodiester linkage at the GpA step and the formation of a 3',5' phosphodiester linkage at the ApG step, producing c[G(2',5')pA(3',5')p]. Acts as a key DNA sensor: directly binds double-stranded DNA (dsDNA), inducing the formation of liquid-like droplets in which CGAS is activated, leading to synthesis of 2',3'-cGAMP, a second messenger that binds to and activates STING1, thereby triggering type-I interferon production. Preferentially binds long dsDNA (around 45 bp) and forms ladder-like networks that function cooperatively to stabilize individual cGAS-dsDNA complexes. Acts as a key foreign DNA sensor, the presence of double-stranded DNA (dsDNA) in the cytoplasm being a danger signal that triggers the immune responses. Has antiviral activity by sensing the presence of dsDNA from DNA viruses in the cytoplasm. Also acts as an innate immune sensor of infection by retroviruses by detecting the presence of reverse-transcribed DNA in the cytosol. Detection of retroviral reverse-transcribed DNA in the cytosol may be indirect and be mediated via interaction with PQBP1, which directly binds reverse-transcribed retroviral DNA. Also detects the presence of DNA from bacteria. 2',3'-cGAMP can be transferred from producing cells to neighboring cells through gap junctions, leading to promote STING1 activation and convey immune response to connecting cells. 2',3'-cGAMP can also be transferred between cells by virtue of packaging within viral particles contributing to IFN-induction in newly infected cells in a cGAS-independent but STING1-dependent manner. Also senses the presence of neutrophil extracellular traps (NETs) that are translocated to the cytosol following phagocytosis, leading to synthesis of 2',3'-cGAMP. In addition to foreign DNA, can also be activated by endogenous nuclear or mitochondrial DNA. When self-DNA leaks into the cytosol during cellular stress (such as mitochondrial stress, DNA damage, mitotic arrest or senescence), or is present in form of cytosolic micronuclei, CGAS is activated leading to a state of sterile inflammation. Acts as a regulator of cellular senescence by binding to cytosolic chromatin fragments that are present in senescent cells, leading to trigger type-I interferon production via STING1 and promote cellular senescence. Also involved in the inflammatory response to genome instability and double-stranded DNA breaks: acts by localizing to micronuclei arising from genome instability. Micronuclei, which as frequently found in cancer cells, consist of chromatin surrounded by its own nuclear membrane: following breakdown of the micronuclear envelope, a process associated with chromothripsis, CGAS binds self-DNA exposed to the cytosol, leading to 2',3'-cGAMP synthesis and subsequent activation of STING1 and type-I interferon production. In a healthy cell, CGAS is however kept inactive even in cellular events that directly expose it to self-DNA, such as mitosis, when cGAS associates with chromatin directly after nuclear envelope breakdown or remains in the form of postmitotic persistent nuclear cGAS pools bound to chromatin. Nuclear CGAS is inactivated by chromatin via direct interaction with nucleosomes, which block CGAS from DNA binding and thus prevent CGAS-induced autoimmunity. Also acts as a suppressor of DNA repair in response to DNA damage: inhibits homologous recombination repair by interacting with PARP1, the CGAS-PARP1 interaction leading to impede the formation of the PARP1-TIMELESS complex. In addition to DNA, also sense translation stress: in response to translation stress, translocates to the cytosol and associates with collided ribosomes, promoting its activation and triggering type-I interferon production. The polypeptide is Cyclic GMP-AMP synthase (Mus musculus (Mouse)).